The sequence spans 509 residues: Cytochrome P450 monooxygenase ORF9 (509 aa).

2 helical membrane passes run 20–40 (IYVLPFVISAAALCYFIGLIV) and 309–329 (LIIAGGETVATFLAATVYYLL). Residue asparagine 353 is glycosylated (N-linked (GlcNAc...) asparagine). Residue cysteine 448 coordinates heme.

This sequence belongs to the cytochrome P450 family. Heme serves as cofactor.

Its subcellular location is the membrane. The protein operates within sesquiterpene biosynthesis. Cytochrome P450 monooxygenase; part of the gene cluster that mediates the biosynthesis of PR-toxin, a bicyclic sesquiterpene belonging to the eremophilane class and acting as a mycotoxin. The first step of the pathway is catalyzed by the aristolochene synthase which performs the cyclization of trans,trans-farnesyl diphosphate (FPP) to the bicyclic sesquiterpene aristolochene. Following the formation of aristolochene, the non-oxygenated aristolochene is converted to the trioxygenated intermediate eremofortin B, via 7-epi-neopetasone. This conversion appears to involve three enzymes, a hydroxysterol oxidase-like enzyme, the quinone-oxidase prx3 that forms the quinone-type-structure in the bicyclic nucleus of aristolochene with the C8-oxo group and the C-3 hydroxyl group, and the P450 monooxygenase ORF6 that introduces the epoxide at the double bond between carbons 1 and 2. No monoxy or dioxy-intermediates have been reported to be released to the broth, so these three early oxidative reactions may be coupled together. Eremofortin B is further oxidized by another P450 monooxygenase, that introduces a second epoxide between carbons 7 and 11 prior to acetylation to eremofortin A by the acetyltransferase ORF8. The second epoxidation may be performed by a second P450 monooxygenase. After the acetylation step, eremofortin A is converted to eremofortin C and then to PR-toxin. First the conversion of eremofortin A to eremofortin C proceeds by oxidation of the side chain of the molecule at C-12 and is catalyzed by the short-chain oxidoreductase prx1. The cytochrome P450 monooxygenase ORF6 is probably also involved in this step. The primary alcohol formed at C-12 is finally oxidized by the short-chain alcohol dehydrogenase prx4 that forms PR-toxin. This is Cytochrome P450 monooxygenase ORF9 from Penicillium roqueforti (strain FM164).